The primary structure comprises 260 residues: Hydroxyethylthiazole kinase (260 aa).

Methionine 49 is a binding site for substrate. ATP is bound by residues arginine 124 and threonine 170. Glycine 197 is a substrate binding site.

The protein belongs to the Thz kinase family. Requires Mg(2+) as cofactor.

The catalysed reaction is 5-(2-hydroxyethyl)-4-methylthiazole + ATP = 4-methyl-5-(2-phosphooxyethyl)-thiazole + ADP + H(+). It participates in cofactor biosynthesis; thiamine diphosphate biosynthesis; 4-methyl-5-(2-phosphoethyl)-thiazole from 5-(2-hydroxyethyl)-4-methylthiazole: step 1/1. Functionally, catalyzes the phosphorylation of the hydroxyl group of 4-methyl-5-beta-hydroxyethylthiazole (THZ). This is Hydroxyethylthiazole kinase from Yersinia enterocolitica serotype O:8 / biotype 1B (strain NCTC 13174 / 8081).